The sequence spans 369 residues: Methylthioribose-1-phosphate isomerase (369 aa).

Substrate contacts are provided by residues 54–56 (RGA), R95, and Q208. D249 (proton donor) is an active-site residue. A substrate-binding site is contributed by 259–260 (NK).

Belongs to the eIF-2B alpha/beta/delta subunits family. MtnA subfamily.

It carries out the reaction 5-(methylsulfanyl)-alpha-D-ribose 1-phosphate = 5-(methylsulfanyl)-D-ribulose 1-phosphate. Its pathway is amino-acid biosynthesis; L-methionine biosynthesis via salvage pathway; L-methionine from S-methyl-5-thio-alpha-D-ribose 1-phosphate: step 1/6. Functionally, catalyzes the interconversion of methylthioribose-1-phosphate (MTR-1-P) into methylthioribulose-1-phosphate (MTRu-1-P). In Desulfosudis oleivorans (strain DSM 6200 / JCM 39069 / Hxd3) (Desulfococcus oleovorans), this protein is Methylthioribose-1-phosphate isomerase.